A 314-amino-acid polypeptide reads, in one-letter code: MAGNSQRRGAVRKAGTKKGPTVGSGGVRRRGLEGKGATPPAHQRPHHPAGKRAAKAARQAQGRHKKTDDTEIVLGRNPVLECLRAGVPATALYVALGADSDERLTESVQIAADKGIAILEVPRHDLDRIAANGMHQGIALQVPPYNYAHPDDLLAEAKSDAMPALLVALDNISDPRNLGAIVRSVAAFGGHGVLIPQRRSASVTAVAWRTSAGAAARTPVARATNLTRALKQWADAGLQVVGLDADGDTTVDQIDGAGPIVVVVGSEGKGLSRLVRENCDAVVSIPMAGPTESLNASVAAGVVLAEIARQRRSA.

The segment at 1-70 (MAGNSQRRGA…QGRHKKTDDT (70 aa)) is disordered. Basic residues predominate over residues 43–65 (QRPHHPAGKRAAKAARQAQGRHK). The S-adenosyl-L-methionine site is built by Gly-265, Ile-285, and Leu-294.

Belongs to the class IV-like SAM-binding methyltransferase superfamily. RNA methyltransferase TrmH family.

This is an uncharacterized protein from Mycolicibacterium vanbaalenii (strain DSM 7251 / JCM 13017 / BCRC 16820 / KCTC 9966 / NRRL B-24157 / PYR-1) (Mycobacterium vanbaalenii).